A 501-amino-acid chain; its full sequence is Atypical kinase COQ8, mitochondrial (501 aa).

The transit peptide at 1–29 (MVTNMVKLRNLRRLYCSSRLLRTIQNGRI) directs the protein to the mitochondrion. Residues 41–69 (YTTKSAKEGEENVERKHEEEKKDTLKSSS) form a disordered region. Basic and acidic residues predominate over residues 45 to 65 (SAKEGEENVERKHEEEKKDTL). The KxGQ motif signature appears at 134–137 (KIGQ). The Protein kinase domain maps to 188–501 (KFDKIPMAAA…LFKEIFAYKV (314 aa)). An AAAS motif motif is present at residues 195 to 198 (AAAS). Residues Ser198, Lys216, and 303-306 (MTRM) each bind ATP. The Proton acceptor role is filled by Asp346. Positions 351 and 365 each coordinate ATP.

It belongs to the protein kinase superfamily. ADCK protein kinase family. As to quaternary structure, forms homopolymers. Predominantly associated with a complex of about 500 kDa.

It localises to the mitochondrion inner membrane. Its pathway is cofactor biosynthesis; ubiquinone biosynthesis. Atypical kinase involved in the biosynthesis of coenzyme Q, also named ubiquinone, an essential lipid-soluble electron transporter for aerobic cellular respiration. Its substrate specificity is still unclear: may act as a protein kinase that mediates phosphorylation of COQ3, COQ5 and/or COQ7. According to other reports, acts as a small molecule kinase, possibly a lipid kinase that phosphorylates a prenyl lipid in the ubiquinone biosynthesis pathway, as suggested by its ability to bind coenzyme Q lipid intermediates. In Saccharomyces cerevisiae (strain ATCC 204508 / S288c) (Baker's yeast), this protein is Atypical kinase COQ8, mitochondrial (COQ8).